A 292-amino-acid chain; its full sequence is Diaminopimelate epimerase (292 aa).

Asn14 and Asn81 together coordinate substrate. The Proton donor role is filled by Cys90. Substrate contacts are provided by residues 91–92, Asn166, Asn202, and 220–221; these read GN and ER. Cys229 (proton acceptor) is an active-site residue. Residue 230–231 coordinates substrate; that stretch reads GT.

Belongs to the diaminopimelate epimerase family. In terms of assembly, homodimer.

Its subcellular location is the cytoplasm. The catalysed reaction is (2S,6S)-2,6-diaminopimelate = meso-2,6-diaminopimelate. It participates in amino-acid biosynthesis; L-lysine biosynthesis via DAP pathway; DL-2,6-diaminopimelate from LL-2,6-diaminopimelate: step 1/1. In terms of biological role, catalyzes the stereoinversion of LL-2,6-diaminopimelate (L,L-DAP) to meso-diaminopimelate (meso-DAP), a precursor of L-lysine and an essential component of the bacterial peptidoglycan. The polypeptide is Diaminopimelate epimerase (Rhodococcus erythropolis (strain PR4 / NBRC 100887)).